Here is a 161-residue protein sequence, read N- to C-terminus: UPF0763 protein Cla_1130 (161 aa).

The protein belongs to the UPF0763 family.

The polypeptide is UPF0763 protein Cla_1130 (Campylobacter lari (strain RM2100 / D67 / ATCC BAA-1060)).